Here is a 79-residue protein sequence, read N- to C-terminus: Conotoxin Tr6.3 (79 aa).

Residues methionine 1–alanine 22 form the signal peptide. Residues valine 23 to arginine 47 constitute a propeptide that is removed on maturation. Disulfide bonds link cysteine 49/cysteine 62, cysteine 56/cysteine 67, and cysteine 61/cysteine 77. 4-hydroxyproline is present on residues proline 60 and proline 63.

It belongs to the conotoxin O1 superfamily. As to expression, expressed by the venom duct.

The protein localises to the secreted. Ion channel inhibitor that inhibits the increase in intracellular calcium upon depolarization in DRG neurons. In vivo, both intraperitoneal and intracranial injections into mice induce hyperactivity. The polypeptide is Conotoxin Tr6.3 (Conus terebra (Sea snail)).